Here is a 119-residue protein sequence, read N- to C-terminus: Acidic phospholipase A2 natratoxin (119 aa).

7 disulfide bridges follow: Cys-11–Cys-71, Cys-26–Cys-118, Cys-28–Cys-44, Cys-43–Cys-99, Cys-50–Cys-92, Cys-60–Cys-85, and Cys-78–Cys-90. Residues Tyr-27, Gly-29, and Gly-31 each coordinate Ca(2+). The active site involves His-47. Asp-48 serves as a coordination point for Ca(2+). Asp-93 is an active-site residue.

It belongs to the phospholipase A2 family. Group I subfamily. D49 sub-subfamily. Requires Ca(2+) as cofactor. As to expression, expressed by the venom gland.

The protein localises to the secreted. It catalyses the reaction a 1,2-diacyl-sn-glycero-3-phosphocholine + H2O = a 1-acyl-sn-glycero-3-phosphocholine + a fatty acid + H(+). Its function is as follows. Snake venom phospholipase A2 (PLA2) that has an effectively inhibitory effect on A-type K(+) currents (Kv/KCN) in acutely dissociated rat dorsal root ganglion (DRG) neurons. This inhibitory effect is independent of its enzymatic activity. PLA2 catalyzes the calcium-dependent hydrolysis of the 2-acyl groups in 3-sn-phosphoglycerides. This is Acidic phospholipase A2 natratoxin from Naja atra (Chinese cobra).